The sequence spans 436 residues: Chaperone SurA (436 aa).

The first 30 residues, 1–30 (MKFFQRPERRLKQWGLALLLAASALLPARA), serve as a signal peptide directing secretion. PpiC domains lie at 180 to 281 (ETEY…KLVD) and 291 to 389 (VTQT…QVLE).

The protein resides in the periplasm. The enzyme catalyses [protein]-peptidylproline (omega=180) = [protein]-peptidylproline (omega=0). Its function is as follows. Chaperone involved in the correct folding and assembly of outer membrane proteins. Recognizes specific patterns of aromatic residues and the orientation of their side chains, which are found more frequently in integral outer membrane proteins. May act in both early periplasmic and late outer membrane-associated steps of protein maturation. The protein is Chaperone SurA of Thiobacillus denitrificans (strain ATCC 25259 / T1).